Here is a 411-residue protein sequence, read N- to C-terminus: MNYGEKAPALWDAIKNEEKRQEDTIELIASENIVSDAVREAQGSVLTNKYAEGYPGKRYYGGCQYIDQVEQLAIDYAKKLFNAEYANVQPHSGSQANMTVYNALLKPGDTILGMGMDAGGHLTHGSKVNFSGKIFNSVSYDLNPETEELDFEKIRQIALENKPKLIIAGASAYSRIIDWQKFREIADEVGAYLMVDMAHIAGLVATGAHPSPIPVADVVTTTTHKTLRGPRGGMILSNNKKLGKKIDSALFPGTQGGPLEHVIAAKAQAFYEDLQPEFSTYIEQVVKNAQAMADEFKKSENIRVVSGGTDNHLMIVDITKTGVTGKDAQNLLDSVNITTNKESIPGDTRSPFITSGLRIGTPAITSRGFKENDAREVARIIIKVLDNPEDKDVLTEAKSSVKSLVDKHQIK.

120–122 is a binding site for (6S)-5,6,7,8-tetrahydrofolate; that stretch reads GHL. An N6-(pyridoxal phosphate)lysine modification is found at Lys-225. 350–352 provides a ligand contact to (6S)-5,6,7,8-tetrahydrofolate; that stretch reads SPF.

This sequence belongs to the SHMT family. In terms of assembly, homodimer. The cofactor is pyridoxal 5'-phosphate.

It localises to the cytoplasm. The catalysed reaction is (6R)-5,10-methylene-5,6,7,8-tetrahydrofolate + glycine + H2O = (6S)-5,6,7,8-tetrahydrofolate + L-serine. It functions in the pathway one-carbon metabolism; tetrahydrofolate interconversion. Its pathway is amino-acid biosynthesis; glycine biosynthesis; glycine from L-serine: step 1/1. Catalyzes the reversible interconversion of serine and glycine with tetrahydrofolate (THF) serving as the one-carbon carrier. This reaction serves as the major source of one-carbon groups required for the biosynthesis of purines, thymidylate, methionine, and other important biomolecules. Also exhibits THF-independent aldolase activity toward beta-hydroxyamino acids, producing glycine and aldehydes, via a retro-aldol mechanism. The polypeptide is Serine hydroxymethyltransferase (Lactobacillus gasseri (strain ATCC 33323 / DSM 20243 / BCRC 14619 / CIP 102991 / JCM 1131 / KCTC 3163 / NCIMB 11718 / NCTC 13722 / AM63)).